We begin with the raw amino-acid sequence, 97 residues long: MLTKSRLQVFHELHCLNFLRKLIYPDVYGKIDYKGQIHANHCIDHIRRIAECGSNATPVVYTGYKNGNLYSEPETYTCRNFTLIRQWAEMKKIQNTQ.

2 consecutive short sequence motifs (HXXHC) follow at residues His11–Cys15 and His38–Cys42.

This sequence belongs to the ustYa family.

It functions in the pathway mycotoxin biosynthesis. Its function is as follows. UstYa family oxidase, part of the gene cluster that mediates the biosynthesis of the secondary metabolite victorin, the molecular basis for Victoria blight of oats. The role of vicYc within the pathway has still to be determined. The pathway starts with the processing of the precursor vicA1 by several endopeptidases including kexin proteases as well as the cluster-specific S28 family peptidases vicPa and vicPb to produce 7 identical copies of the hexapeptide Gly-Leu-Lys-Leu-Ala-Phe. After being excised from the precursor peptide, the core peptides are cyclized and modified post-translationally by enzymes encoded within the gene cluster. The ustYa family oxidase vicYb is required for the formation of the macrocycle in victorin and the copper amine oxidases (CAOs) vicK1 and vicK2 are responsible for converting victorin to the active form by oxidizing the N-terminal glycyl residue in the peptides to glyoxylate. Relaxed substrate specificity of enzymes in the victorin biosynthetic pathway results in a metabolic grid that produces a set of analogs including victorinines B, C, E or HV-toxin M. This Bipolaris victoriae (strain FI3) (Victoria blight of oats agent) protein is UstYa family oxidase VicYc.